The sequence spans 496 residues: Glutelin type-A 3 (496 aa).

Positions 1–24 (MATIKFPIVFSVVCLFLLCNGSLA) are cleaved as a signal peptide. 2 cysteine pairs are disulfide-bonded: C45–C78 and C121–C312. Cupin type-1 domains follow at residues 50 to 248 (LQAF…GVAR) and 318 to 467 (QNID…EEAR).

Belongs to the 11S seed storage protein (globulins) family. As to quaternary structure, hexamer; each subunit is composed of an acidic and a basic chain derived from a single precursor and linked by a disulfide bond.

Seed storage protein. The chain is Glutelin type-A 3 (GLUA3) from Oryza sativa subsp. japonica (Rice).